Here is a 264-residue protein sequence, read N- to C-terminus: Thymidylate synthase (264 aa).

R21 contacts dUMP. H51 is a (6R)-5,10-methylene-5,6,7,8-tetrahydrofolate binding site. Residue R126–R127 coordinates dUMP. C146 (nucleophile) is an active-site residue. DUMP is bound by residues R166 to D169, N177, and H207 to Y209. Position 169 (D169) interacts with (6R)-5,10-methylene-5,6,7,8-tetrahydrofolate. S263 lines the (6R)-5,10-methylene-5,6,7,8-tetrahydrofolate pocket.

The protein belongs to the thymidylate synthase family. Bacterial-type ThyA subfamily. Homodimer.

Its subcellular location is the cytoplasm. The enzyme catalyses dUMP + (6R)-5,10-methylene-5,6,7,8-tetrahydrofolate = 7,8-dihydrofolate + dTMP. The protein operates within pyrimidine metabolism; dTTP biosynthesis. In terms of biological role, catalyzes the reductive methylation of 2'-deoxyuridine-5'-monophosphate (dUMP) to 2'-deoxythymidine-5'-monophosphate (dTMP) while utilizing 5,10-methylenetetrahydrofolate (mTHF) as the methyl donor and reductant in the reaction, yielding dihydrofolate (DHF) as a by-product. This enzymatic reaction provides an intracellular de novo source of dTMP, an essential precursor for DNA biosynthesis. In Buchnera aphidicola subsp. Acyrthosiphon pisum (strain 5A), this protein is Thymidylate synthase.